Reading from the N-terminus, the 295-residue chain is Cyclic dipyrimidine nucleotide synthase CdnE (295 aa).

A disordered region spans residues 1–28 (MAKYTEDQLTSWTKPPSDSEQTKLENSE). Residues 7–19 (DQLTSWTKPPSDS) show a composition bias toward polar residues. 2 residues coordinate UTP: Gln51 and Ser53. Asp67 serves as a coordination point for Mg(2+). Residues Lys123, Asn169, Arg197, Phe217, and Lys276 each contribute to the UTP site. The Pyrimidine specificity motif (R/Q)xW in donor pocket signature appears at 275–277 (RKW).

This sequence belongs to the CD-NTase family. E02 subfamily. As to quaternary structure, monomer. Mg(2+) serves as cofactor.

It catalyses the reaction 2 UTP = c-di-UMP + 2 diphosphate. It carries out the reaction UTP + CTP = cyclic CMP-UMP + 2 diphosphate. Its function is as follows. Cyclic nucleotide synthase (second messenger synthase) of a CBASS antivirus system. CBASS (cyclic oligonucleotide-based antiphage signaling system) provides immunity against bacteriophage. The CD-NTase protein synthesizes cyclic nucleotides in response to infection; these serve as specific second messenger signals. The signals activate a diverse range of effectors, leading to bacterial cell death and thus abortive phage infection. A type I-B(UU) CBASS system. The protein is Cyclic dipyrimidine nucleotide synthase CdnE of Cecembia lonarensis (strain CCUG 58316 / KCTC 22772 / LW9).